A 204-amino-acid chain; its full sequence is Methylthioribulose-1-phosphate dehydratase (204 aa).

Zn(2+) contacts are provided by His96 and His98.

Belongs to the aldolase class II family. MtnB subfamily. It depends on Zn(2+) as a cofactor.

It carries out the reaction 5-(methylsulfanyl)-D-ribulose 1-phosphate = 5-methylsulfanyl-2,3-dioxopentyl phosphate + H2O. Its pathway is amino-acid biosynthesis; L-methionine biosynthesis via salvage pathway; L-methionine from S-methyl-5-thio-alpha-D-ribose 1-phosphate: step 2/6. In terms of biological role, catalyzes the dehydration of methylthioribulose-1-phosphate (MTRu-1-P) into 2,3-diketo-5-methylthiopentyl-1-phosphate (DK-MTP-1-P). The sequence is that of Methylthioribulose-1-phosphate dehydratase from Methylococcus capsulatus (strain ATCC 33009 / NCIMB 11132 / Bath).